We begin with the raw amino-acid sequence, 855 residues long: MGSNRGRKAGGGSQDFGAGLKYNSRLENMNGFEEGVEFLPANNAKKVEKRGPRRWVVLVAVLFSFLLLSLMAGLLVWHFHYRNVRVQKVFNGHLRITNEIFLDAYENSTSTEFISLASQVKEALKLLYNEVPVLGPYHKKSAVTAFSEGSVIAYYWSEFSIPPHLAEEVDRAMAVERVVTLPPRARALKSFVLTSVVAFPIDPRMLQRTQDNSCSFALHAHGAAVTRFTTPGFPNSPYPAHARCQWVLRGDADSVLSLTFRSFDVAPCDEHGSDLVTVYDSLSPMEPHAVVRLCGTFSPSYNLTFLSSQNVFLVTLITNTDRRHPGFEATFFQLPKMSSCGGFLSDTQGTFSSPYYPGHYPPNINCTWNIKVPNNRNVKVRFKLFYLVDPNVPVGSCTKDYVEINGEKYCGERSQFVVSSNSSKITVHFHSDHSYTDTGFLAEYLSYDSNDPCPGMFMCKTGRCIRKELRCDGWADCPDYSDERYCRCNATHQFTCKNQFCKPLFWVCDSVNDCGDGSDEEGCSCPAGSFKCSNGKCLPQSQKCNGKDNCGDGSDEASCDSVNVVSCTKYTYRCQNGLCLSKGNPECDGKTDCSDGSDEKNCDCGLRSFTKQARVVGGTNADEGEWPWQVSLHALGQGHLCGASLISPDWLVSAAHCFQDDKNFKYSDYTMWTAFLGLLDQSKRSASGVQELKLKRIITHPSFNDFTFDYDIALLELEKSVEYSTVVRPICLPDATHVFPAGKAIWVTGWGHTKEGGTGALILQKGEIRVINQTTCEDLMPQQITPRMMCVGFLSGGVDSCQGDSGGPLSSAEKDGRMFQAGVVSWGEGCAQRNKPGVYTRLPVVRDWIKEHTGV.

Residues 1 to 55 (MGSNRGRKAGGGSQDFGAGLKYNSRLENMNGFEEGVEFLPANNAKKVEKRGPRRW) are Cytoplasmic-facing. The residue at position 13 (Ser-13) is a Phosphoserine. The helical; Signal-anchor for type II membrane protein transmembrane segment at 56–76 (VVLVAVLFSFLLLSLMAGLLV) threads the bilayer. The Extracellular portion of the chain corresponds to 77–855 (WHFHYRNVRV…RDWIKEHTGV (779 aa)). The 118-residue stretch at 86–203 (VQKVFNGHLR…TSVVAFPIDP (118 aa)) folds into the SEA domain. Asn-107 is a glycosylation site (N-linked (GlcNAc...) asparagine). A disulfide bond links Cys-214 and Cys-244. 2 consecutive CUB domains span residues 214–331 (CSFA…EATF) and 340–444 (CGGF…LAEY). N-linked (GlcNAc...) asparagine glycosylation is found at Asn-302 and Asn-365. 2 cysteine pairs are disulfide-bonded: Cys-340–Cys-366 and Cys-397–Cys-410. N-linked (GlcNAc...) asparagine glycosylation occurs at Asn-421. LDL-receptor class A domains follow at residues 451–488 (DPCP…YCRC), 489–522 (NATH…DEEG), 523–561 (CSCP…SCDS), and 565–604 (VSCT…NCDC). 13 disulfide bridges follow: Cys-453–Cys-464, Cys-459–Cys-477, Cys-471–Cys-486, Cys-488–Cys-501, Cys-496–Cys-514, Cys-508–Cys-523, Cys-525–Cys-537, Cys-532–Cys-550, Cys-544–Cys-559, Cys-567–Cys-579, Cys-574–Cys-593, Cys-587–Cys-602, and Cys-641–Cys-657. Asn-489 carries an N-linked (GlcNAc...) asparagine glycan. A Peptidase S1 domain is found at 615 to 854 (VVGGTNADEG…VRDWIKEHTG (240 aa)). Catalysis depends on charge relay system residues His-656 and Asp-711. Asn-772 carries an N-linked (GlcNAc...) asparagine glycan. 2 disulfides stabilise this stretch: Cys-776/Cys-790 and Cys-801/Cys-830. Ser-805 (charge relay system) is an active-site residue.

This sequence belongs to the peptidase S1 family. Interacts with CDCP1. May interact with TMEFF1. Highly expressed in intestine, kidney, lung, and thymus. Not expressed in skeletal muscle, liver, heart, testis and brain.

It is found in the membrane. It carries out the reaction Cleaves various synthetic substrates with Arg or Lys at the P1 position and prefers small side-chain amino acids, such as Ala and Gly, at the P2 position.. Exhibits trypsin-like activity as defined by cleavage of synthetic substrates with Arg or Lys as the P1 site. Involved in the terminal differentiation of keratinocytes through prostasin (PRSS8) activation and filaggrin (FLG) processing. Proteolytically cleaves and therefore activates TMPRSS13. In Mus musculus (Mouse), this protein is Suppressor of tumorigenicity 14 protein homolog (St14).